The sequence spans 239 residues: Ribosomal RNA small subunit methyltransferase G (239 aa).

Residues glycine 77, phenylalanine 82, 128 to 129, and arginine 147 each bind S-adenosyl-L-methionine; that span reads AE.

The protein belongs to the methyltransferase superfamily. RNA methyltransferase RsmG family.

It localises to the cytoplasm. Functionally, specifically methylates the N7 position of guanine in position 535 of 16S rRNA. In Bacillus mycoides (strain KBAB4) (Bacillus weihenstephanensis), this protein is Ribosomal RNA small subunit methyltransferase G.